A 625-amino-acid polypeptide reads, in one-letter code: tRNA uridine 5-carboxymethylaminomethyl modification enzyme MnmG (625 aa).

Residues G16–G21, I128, and S183 contribute to the FAD site. G275–F289 serves as a coordination point for NAD(+). Q372 provides a ligand contact to FAD.

Belongs to the MnmG family. As to quaternary structure, homodimer. Heterotetramer of two MnmE and two MnmG subunits. FAD is required as a cofactor.

It is found in the cytoplasm. In terms of biological role, NAD-binding protein involved in the addition of a carboxymethylaminomethyl (cmnm) group at the wobble position (U34) of certain tRNAs, forming tRNA-cmnm(5)s(2)U34. The chain is tRNA uridine 5-carboxymethylaminomethyl modification enzyme MnmG from Protochlamydia amoebophila (strain UWE25).